A 510-amino-acid polypeptide reads, in one-letter code: Thermostable carboxypeptidase 1 (510 aa).

The Peptidase M32 domain occupies 3–506 (PEAAYQNLLE…FLAYLEKKYA (504 aa)). The HPF signature appears at 245-247 (HPF). The DXRXT signature appears at 255-259 (DVRIT). His276 is a binding site for Zn(2+). Residues 276–280 (HEMGH) carry the HEXXH motif. The active-site Proton donor/acceptor is the Glu277. Zn(2+)-binding residues include His280 and Glu306. Positions 305 to 308 (HESQ) match the HES/GQ motif. The I/NRXXA/SD motif lies at 357–362 (IRVEAD). The GXXQDXHW signature appears at 412-419 (GVMQDVHW).

The protein belongs to the peptidase M32 family. Homodimer. Zn(2+) is required as a cofactor.

It carries out the reaction Release of a C-terminal amino acid with broad specificity, except for -Pro.. In terms of biological role, broad specificity carboxypetidase that releases amino acids sequentially from the C-terminus, including neutral, aromatic, polar and basic residues, but not Pro. Has lower activity with substrates ending with Gly or Glu. The polypeptide is Thermostable carboxypeptidase 1 (Thermus thermophilus (strain ATCC 27634 / DSM 579 / HB8)).